A 331-amino-acid polypeptide reads, in one-letter code: Phosphate acyltransferase (331 aa).

It belongs to the PlsX family. Homodimer. Probably interacts with PlsY.

Its subcellular location is the cytoplasm. The enzyme catalyses a fatty acyl-[ACP] + phosphate = an acyl phosphate + holo-[ACP]. It participates in lipid metabolism; phospholipid metabolism. Functionally, catalyzes the reversible formation of acyl-phosphate (acyl-PO(4)) from acyl-[acyl-carrier-protein] (acyl-ACP). This enzyme utilizes acyl-ACP as fatty acyl donor, but not acyl-CoA. The sequence is that of Phosphate acyltransferase from Lactococcus lactis subsp. lactis (strain IL1403) (Streptococcus lactis).